The chain runs to 264 residues: SPARC (264 aa).

The N-terminal stretch at 1-16 (MRYALAACLLLLAASS) is a signal peptide. The region spanning 52–74 (PCEDHQCGWGKECVVGKKGEPTC) is the Follistatin-like domain. 7 disulfides stabilise this stretch: C53–C64, C58–C74, C76–C110, C80–C103, C92–C135, C141–C228, and C236–C252. Positions 68–137 (KKGEPTCECI…HLEYLGECKK (70 aa)) constitute a Kazal-like domain. N96 is a glycosylation site (N-linked (GlcNAc...) asparagine). Residues 224–259 (PMESCIKPFLEGCDANNDGNISIKEWGKCLGLKEGE) form the EF-hand domain. Ca(2+) is bound by residues D237, N239, D241, N243, and E248. A glycan (N-linked (GlcNAc...) asparagine) is linked at N243.

This sequence belongs to the SPARC family. Expressed by body wall and sex muscle cells. Probable association with basement membranes.

Its subcellular location is the secreted. The protein resides in the extracellular space. It is found in the extracellular matrix. The protein localises to the basement membrane. Has a high affinity for collagen. Affects nematode body morphology and mobility. Essential for C.elegans development and muscle function. The cysteine-rich region could have protease inhibitory activity or may provide the framework for a protein binding module. Probable role in skeletal morphogenesis. The chain is SPARC (ost-1) from Caenorhabditis elegans.